Reading from the N-terminus, the 198-residue chain is Holliday junction branch migration complex subunit RuvA (198 aa).

Residues 1–64 form a domain I region; sequence MYEYIKGKYI…EDFIGLYGFD (64 aa). Residues 65–143 are domain II; the sequence is SKEELEMFKL…PDELVDSSLE (79 aa). Positions 144 to 149 are flexible linker; sequence IDTKDN. A domain III region spans residues 150-198; that stretch reads ENVMALSEALSALIALGYSEKEAESVLKKIDKNDSVENIIKNALKALMG.

The protein belongs to the RuvA family. Homotetramer. Forms an RuvA(8)-RuvB(12)-Holliday junction (HJ) complex. HJ DNA is sandwiched between 2 RuvA tetramers; dsDNA enters through RuvA and exits via RuvB. An RuvB hexamer assembles on each DNA strand where it exits the tetramer. Each RuvB hexamer is contacted by two RuvA subunits (via domain III) on 2 adjacent RuvB subunits; this complex drives branch migration. In the full resolvosome a probable DNA-RuvA(4)-RuvB(12)-RuvC(2) complex forms which resolves the HJ.

Its subcellular location is the cytoplasm. Its function is as follows. The RuvA-RuvB-RuvC complex processes Holliday junction (HJ) DNA during genetic recombination and DNA repair, while the RuvA-RuvB complex plays an important role in the rescue of blocked DNA replication forks via replication fork reversal (RFR). RuvA specifically binds to HJ cruciform DNA, conferring on it an open structure. The RuvB hexamer acts as an ATP-dependent pump, pulling dsDNA into and through the RuvAB complex. HJ branch migration allows RuvC to scan DNA until it finds its consensus sequence, where it cleaves and resolves the cruciform DNA. The polypeptide is Holliday junction branch migration complex subunit RuvA (Clostridium beijerinckii (strain ATCC 51743 / NCIMB 8052) (Clostridium acetobutylicum)).